Reading from the N-terminus, the 218-residue chain is Capsid protein (218 aa).

Met1 carries the post-translational modification N-acetylmethionine; by host. Positions 1–10 (MDKSESTSAG) are enriched in low complexity. The tract at residues 1–30 (MDKSESTSAGRNRRRRLRRGSRSASSSSDA) is disordered. The segment covering 11-21 (RNRRRRLRRGS) has biased composition (basic residues).

The protein belongs to the cucumovirus capsid protein family.

It is found in the virion. Its function is as follows. Capsid protein. Probably binds RNA and plays a role in packaging. The chain is Capsid protein from Cucumber mosaic virus (strain Y) (CMV).